A 157-amino-acid chain; its full sequence is Probable succinate transporter subunit YjjB (157 aa).

A run of 4 helical transmembrane segments spans residues G2 to V22, A55 to I75, I87 to I107, and F129 to W149.

Belongs to the ThrE exporter (TC 2.A.79) family. In terms of assembly, the transporter is composed of YjjB and YjjP.

The protein localises to the cell inner membrane. In terms of biological role, involved in succinate export with YjjP. Both proteins are required for export. This Klebsiella pneumoniae (strain 342) protein is Probable succinate transporter subunit YjjB.